Reading from the N-terminus, the 108-residue chain is MILSTTNTIEGATITSYQGVVTAEVVYGTNALRDFFAGIRDMIGGRTASYERIFEKGHQEALRELESNAQKRGADAVIGISMDTGTINVDDKGVLLLITATGTAVKLG.

It belongs to the UPF0145 family.

In Picosynechococcus sp. (strain ATCC 27264 / PCC 7002 / PR-6) (Agmenellum quadruplicatum), this protein is UPF0145 protein SYNPCC7002_A1337.